A 507-amino-acid polypeptide reads, in one-letter code: Maturase K (507 aa).

It belongs to the intron maturase 2 family. MatK subfamily.

The protein resides in the plastid. Its subcellular location is the chloroplast. In terms of biological role, usually encoded in the trnK tRNA gene intron. Probably assists in splicing its own and other chloroplast group II introns. This Robinia pseudoacacia (Black locust) protein is Maturase K.